The following is a 550-amino-acid chain: Mitochondrial distribution and morphology protein 12 (550 aa).

Residues 1–550 (MSIDLNWETV…VYPSYWTFLV (550 aa)) form the SMP-LTD domain. Disordered stretches follow at residues 76 to 97 (SDLA…DRRR), 196 to 386 (GHGH…KLRE), and 466 to 489 (ENEV…GGNG). Residues 83 to 92 (GSEEDEEEIA) are compositionally biased toward acidic residues. The span at 270–286 (PPFPPSSTGGPSPPPGL) shows a compositional bias: pro residues. Residues 288–305 (KPHHPHHPHHHHAHHAHP) show a composition bias toward basic residues. Residues 327–344 (PTRDKTTPSHHPDPEDVH) are compositionally biased toward basic and acidic residues. The span at 346–355 (PNTTTTNKQR) shows a compositional bias: polar residues. Residues 356-371 (STSPATSSPLATSAQE) are compositionally biased toward low complexity.

Belongs to the MDM12 family. As to quaternary structure, component of the ER-mitochondria encounter structure (ERMES) or MDM complex, composed of MMM1, MDM10, MDM12 and MDM34. An MMM1 homodimer associates with one molecule of MDM12 on each side in a pairwise head-to-tail manner, and the SMP-LTD domains of MMM1 and MDM12 generate a continuous hydrophobic tunnel for phospholipid trafficking.

The protein resides in the mitochondrion outer membrane. The protein localises to the endoplasmic reticulum membrane. Its function is as follows. Component of the ERMES/MDM complex, which serves as a molecular tether to connect the endoplasmic reticulum (ER) and mitochondria. Components of this complex are involved in the control of mitochondrial shape and protein biogenesis, and function in nonvesicular lipid trafficking between the ER and mitochondria. MDM12 is required for the interaction of the ER-resident membrane protein MMM1 and the outer mitochondrial membrane-resident beta-barrel protein MDM10. The MDM12-MMM1 subcomplex functions in the major beta-barrel assembly pathway that is responsible for biogenesis of all mitochondrial outer membrane beta-barrel proteins, and acts in a late step after the SAM complex. The MDM10-MDM12-MMM1 subcomplex further acts in the TOM40-specific pathway after the action of the MDM12-MMM1 complex. Essential for establishing and maintaining the structure of mitochondria and maintenance of mtDNA nucleoids. The chain is Mitochondrial distribution and morphology protein 12 from Podospora anserina (strain S / ATCC MYA-4624 / DSM 980 / FGSC 10383) (Pleurage anserina).